Reading from the N-terminus, the 106-residue chain is Circadian clock oscillator protein KaiB (106 aa).

It belongs to the KaiB family. As to quaternary structure, the KaiABC complex composition changes during the circadian cycle to control KaiC phosphorylation. Complexes KaiC(6), KaiA(2-4):KaiC(6), KaiB(6):KaiC(6) and KaiC(6):KaiB(6):KaiA(12) are among the most important forms, many form cooperatively. Undergoes a major conformational rearrangment; in the free state forms homotetramers as a dimer of dimers. When bound to the CI domain of KaiC switches to a monomeric thioredoxin-fold (KaiB(fs)). KaiB(fs) binds CikA, leading it to dephosphorylate phospho-RpaA.

Its function is as follows. Key component of the KaiABC oscillator complex, which constitutes the main circadian regulator in cyanobacteria. Complex composition changes during the circadian cycle to control KaiC phosphorylation. KaiA stimulates KaiC autophosphorylation, while KaiB sequesters KaiA, leading to KaiC autodephosphorylation. Phospho-Ser-431 KaiC accumulation triggers binding of KaiB to form the KaiB(6):KaiC(6) complex, leading to changes in output regulators CikA and SasA. KaiB switches to a thioredoxin-like fold (KaiB(fs)) when bound to KaiC. KaiB(6):KaiC(6) formation exposes a site for KaiA binding that sequesters KaiA from KaiC, making the KaiC(6):KaiB(6):KaiA(12) complex that results in KaiC autodephosphorylation. Functionally, a metamorphic protein which reversibly switches between an inactive tetrameric fold and a rare, thioredoxin-like monomeric fold (KaiB(fs)). KaiB(fs) binds phospho-KaiC, KaiA and CikA. KaiA and CikA compete for binding to KaiB(fs), and KaiB(fs) and SasA compete for binding to KaiC, thus the clock oscillator and output signal pathway are tightly coupled. The polypeptide is Circadian clock oscillator protein KaiB (Gloeothece citriformis (strain PCC 7424) (Cyanothece sp. (strain PCC 7424))).